Consider the following 329-residue polypeptide: Biotin synthase (329 aa).

One can recognise a Radical SAM core domain in the interval 48–278; it reads FVGDKVYLCS…SKKISVCGGR (231 aa). [4Fe-4S] cluster contacts are provided by cysteine 66, cysteine 70, and cysteine 73. [2Fe-2S] cluster-binding residues include serine 143 and cysteine 203.

It belongs to the radical SAM superfamily. Biotin synthase family. As to quaternary structure, homodimer. It depends on [4Fe-4S] cluster as a cofactor. The cofactor is [2Fe-2S] cluster.

It carries out the reaction (4R,5S)-dethiobiotin + (sulfur carrier)-SH + 2 reduced [2Fe-2S]-[ferredoxin] + 2 S-adenosyl-L-methionine = (sulfur carrier)-H + biotin + 2 5'-deoxyadenosine + 2 L-methionine + 2 oxidized [2Fe-2S]-[ferredoxin]. It participates in cofactor biosynthesis; biotin biosynthesis; biotin from 7,8-diaminononanoate: step 2/2. Its function is as follows. Catalyzes the conversion of dethiobiotin (DTB) to biotin by the insertion of a sulfur atom into dethiobiotin via a radical-based mechanism. In Geotalea uraniireducens (strain Rf4) (Geobacter uraniireducens), this protein is Biotin synthase.